The sequence spans 162 residues: Protein-export protein SecB (162 aa).

This sequence belongs to the SecB family. In terms of assembly, homotetramer, a dimer of dimers. One homotetramer interacts with 1 SecA dimer.

Its subcellular location is the cytoplasm. One of the proteins required for the normal export of preproteins out of the cell cytoplasm. It is a molecular chaperone that binds to a subset of precursor proteins, maintaining them in a translocation-competent state. It also specifically binds to its receptor SecA. This chain is Protein-export protein SecB, found in Pseudoalteromonas translucida (strain TAC 125).